Consider the following 101-residue polypeptide: MAKIADPRDIILAPVVSEKSYGLMEQNTYAFFVAPTANKTEIKIAIEQIFGVKVDSVNTANRAGKRKRSRTGYGVRKATKRAYVTLREGSDAIDIFGGNAA.

The protein belongs to the universal ribosomal protein uL23 family. In terms of assembly, part of the 50S ribosomal subunit. Contacts protein L29, and trigger factor when it is bound to the ribosome.

Its function is as follows. One of the early assembly proteins it binds 23S rRNA. One of the proteins that surrounds the polypeptide exit tunnel on the outside of the ribosome. Forms the main docking site for trigger factor binding to the ribosome. The sequence is that of Large ribosomal subunit protein uL23 from Corynebacterium diphtheriae (strain ATCC 700971 / NCTC 13129 / Biotype gravis).